Consider the following 142-residue polypeptide: Putative pre-16S rRNA nuclease (142 aa).

This sequence belongs to the YqgF nuclease family.

The protein localises to the cytoplasm. Could be a nuclease involved in processing of the 5'-end of pre-16S rRNA. This chain is Putative pre-16S rRNA nuclease, found in Nitratidesulfovibrio vulgaris (strain DSM 19637 / Miyazaki F) (Desulfovibrio vulgaris).